The sequence spans 430 residues: Adenylosuccinate synthetase (430 aa).

Residues 13-19 (GDEGKGK) and 41-43 (GHT) each bind GTP. D14 serves as the catalytic Proton acceptor. Residues D14 and G41 each contribute to the Mg(2+) site. IMP contacts are provided by residues 14-17 (DEGK), 39-42 (NAGH), T130, R144, Q225, T240, and R304. The active-site Proton donor is H42. Position 300 to 306 (300 to 306 (ASTGRPR)) interacts with substrate. Residues R306, 332–334 (KLD), and 414–416 (STG) each bind GTP.

The protein belongs to the adenylosuccinate synthetase family. In terms of assembly, homodimer. It depends on Mg(2+) as a cofactor.

The protein localises to the cytoplasm. It catalyses the reaction IMP + L-aspartate + GTP = N(6)-(1,2-dicarboxyethyl)-AMP + GDP + phosphate + 2 H(+). The protein operates within purine metabolism; AMP biosynthesis via de novo pathway; AMP from IMP: step 1/2. Plays an important role in the de novo pathway of purine nucleotide biosynthesis. Catalyzes the first committed step in the biosynthesis of AMP from IMP. In Xylella fastidiosa (strain 9a5c), this protein is Adenylosuccinate synthetase.